Here is a 307-residue protein sequence, read N- to C-terminus: Protoheme IX farnesyltransferase (307 aa).

8 helical membrane-spanning segments follow: residues 32–52 (MGIVNSNTLTVFTGFWLALHF), 65–85 (FFTIVGSGLVMAGVCCLNNYI), 108–128 (PGFALTFGLVILLLGFVFLLL), 131–151 (PMAVLMGFIGAFTYVVLYSLW), 158–178 (LNTVVGSISGAVPPLIGWAAI), 186–206 (IAWMLFLIMFIWQIPHFLALA), 251–271 (LGITFMVIATLLNIGWIVLGF), and 287–307 (FVYSLNYLTILFVSMIVVTFF).

The protein belongs to the UbiA prenyltransferase family. Protoheme IX farnesyltransferase subfamily. As to quaternary structure, interacts with CtaA.

The protein resides in the cell membrane. It catalyses the reaction heme b + (2E,6E)-farnesyl diphosphate + H2O = Fe(II)-heme o + diphosphate. It functions in the pathway porphyrin-containing compound metabolism; heme O biosynthesis; heme O from protoheme: step 1/1. Functionally, converts heme B (protoheme IX) to heme O by substitution of the vinyl group on carbon 2 of heme B porphyrin ring with a hydroxyethyl farnesyl side group. In Bacillus cereus (strain ATCC 10987 / NRS 248), this protein is Protoheme IX farnesyltransferase.